The primary structure comprises 145 residues: D-aminoacyl-tRNA deacylase (145 aa).

Residues 137-138 carry the Gly-cisPro motif, important for rejection of L-amino acids motif; that stretch reads GP.

Belongs to the DTD family. Homodimer.

The protein localises to the cytoplasm. It catalyses the reaction glycyl-tRNA(Ala) + H2O = tRNA(Ala) + glycine + H(+). It carries out the reaction a D-aminoacyl-tRNA + H2O = a tRNA + a D-alpha-amino acid + H(+). In terms of biological role, an aminoacyl-tRNA editing enzyme that deacylates mischarged D-aminoacyl-tRNAs. Also deacylates mischarged glycyl-tRNA(Ala), protecting cells against glycine mischarging by AlaRS. Acts via tRNA-based rather than protein-based catalysis; rejects L-amino acids rather than detecting D-amino acids in the active site. By recycling D-aminoacyl-tRNA to D-amino acids and free tRNA molecules, this enzyme counteracts the toxicity associated with the formation of D-aminoacyl-tRNA entities in vivo and helps enforce protein L-homochirality. This Francisella tularensis subsp. holarctica (strain LVS) protein is D-aminoacyl-tRNA deacylase.